The following is a 202-amino-acid chain: Matrix protein (202 aa).

A PPXY motif motif is present at residues 35 to 38; it reads PPEY. The tract at residues 115-151 is essential for glycoprotein binding; that stretch reads KLRRTLIFQWADSRGPLEGEELEYSQEITWDDDTEFV.

This sequence belongs to the lyssavirus matrix protein family. In terms of assembly, homomultimer. Interacts with nucleoprotein and with the cytoplasmic domain of glycoprotein. Interacts with host ATP6V1A; this interaction plays an important role in virion uncoating after viral entry.

The protein resides in the virion membrane. It is found in the host endomembrane system. It localises to the host cytoplasm. Plays a major role in assembly, budding and uncoating of virion after membrane fusion. Completely covers the ribonucleoprotein coil and keep it in condensed bullet-shaped form. Inhibits viral transcription and stimulates replication. Plays a major role in early induction of TRAIL-mediated apoptosis in infected neurons. Inhibits the integrated stress response (ISR) in the infected cell by blocking the formation of stress granules. The polypeptide is Matrix protein (M) (Rabies virus (strain CVS-11) (RABV)).